Consider the following 326-residue polypeptide: Fos-related antigen 2 (326 aa).

N-acetylmethionine is present on Met1. Positions 1 to 39 (MYQDYPGNFDTSSRGSSGSPAHAESYSSGGGGQQKFRVD) are disordered. A compositionally biased stretch (polar residues) spans 9–19 (FDTSSRGSSGS). Lys35 is covalently cross-linked (Glycyl lysine isopeptide (Lys-Gly) (interchain with G-Cter in SUMO2)). Position 104 is an N6-acetyllysine; alternate (Lys104). A Glycyl lysine isopeptide (Lys-Gly) (interchain with G-Cter in SUMO2); alternate cross-link involves residue Lys104. 3 disordered regions span residues 111–131 (GRRR…RIRR), 193–244 (ISPE…QRSV), and 289–326 (EQES…LLAL). Ser120 is subject to Phosphoserine. A bZIP domain is found at 124–187 (EEKRRIRRER…EKLEFMLVAH (64 aa)). The basic motif stretch occupies residues 126-128 (KRR). Residues 129–136 (IRRERNKL) form a leucine-zipper region. A Phosphoserine modification is found at Ser200. Over residues 201 to 211 (PPTSGLQSLRG) the composition is skewed to polar residues. Residue Lys222 forms a Glycyl lysine isopeptide (Lys-Gly) (interchain with G-Cter in SUMO2); alternate linkage. Lys222 is covalently cross-linked (Glycyl lysine isopeptide (Lys-Gly) (interchain with G-Cter in SUMO1); alternate). At Ser230 the chain carries Phosphoserine. Lys239 is covalently cross-linked (Glycyl lysine isopeptide (Lys-Gly) (interchain with G-Cter in SUMO2)). Phosphoserine is present on residues Ser308 and Ser320. Over residues 308-320 (SSSGDQSSDSLNS) the composition is skewed to low complexity.

This sequence belongs to the bZIP family. Fos subfamily. Heterodimer. Interacts with the BAF multiprotein chromatin-remodeling complex subunits SMARCB1 and SMARCD1. Interacts with ARID1A and JUN. In terms of tissue distribution, expressed in the brain cortex. Expressed at night in pineal gland (at protein level). Also expressed in osteoblasts (at protein level).

Its subcellular location is the nucleus. Its function is as follows. Controls osteoclast survival and size. As a dimer with JUN, activates LIF transcription. Activates CEBPB transcription in PGE2-activated osteoblasts. The chain is Fos-related antigen 2 (Fosl2) from Rattus norvegicus (Rat).